Consider the following 201-residue polypeptide: Calcium channel flower (201 aa).

3 helical membrane passes run 37-57 (LGIVGAFFAILFGLWNVLSII), 59-79 (LSVSCLVAGIIQMIAGFVVMA), and 103-120 (PMYFRAGLYCALAVPPIF).

The protein belongs to the calcium channel flower family. As to quaternary structure, homomultimer. Associates with the dally/ magu complex.

It is found in the cell membrane. The protein localises to the cytoplasmic vesicle. It localises to the secretory vesicle. The protein resides in the synaptic vesicle membrane. Its subcellular location is the presynaptic cell membrane. It is found in the endosome. Its activity is regulated as follows. Channel activity is inhibited by La(3+), which reduces Ca(2+) influx and thus inhibits it's function in promoting activity-dependent bulk endocytosis (ADBE) in response to high stimuli. In terms of biological role, transmembrane protein which mediates synaptic endocytosis, fitness-based cell culling, neuronal culling, morphogen gradient scaling, and calcium transport. Regulates synaptic endocytosis and hence couples exo- with endocytosis. Controls two major modes of synaptic vesicle (SV) endocytosis in the synaptic boutons of neuromuscular junctions (NMJs); Ca(2+) channel-independent Clathrin-mediated endocytosis (CME) in response to mild stimulation, and Ca(2+) channel-dependent activity-dependent bulk endocytosis (ADBE) in response to strong stimulation. Functions in ADBE and subsequent SV reformation from bulk endosomes by initiating Ca(2+) channel-dependent phosphatidylinositol 4,5-bisphosphate (PtdIns(4,5)P2) compartmentalization in synaptic boutons. There it acts at the periactive zone to provide the low Ca(2+) levels required to initiate Calcineurin activation and upregulate PtdIns(4,5)P2. Conversely PtdIns(4,5)P2 enhances fwe Ca(2+) channel-activity, establishing a positive feedback loop that induces PtdIns(4,5)P2 microdomain at the periactive zone. These microdomains trigger bulk membrane invagination (i.e. ADBE) by triggering actin polymerization while also promoting localization of fwe to bulk endosomes, thereby removing the ADBE trigger to reduce endocytosis and prevent excess membrane uptake. PtdIns(4,5)P2 then promotes SV reformation from the bulk endosomes, to coordinate ADBE and subsequent SV reformation. Different combinations of the flower isoforms at the cell membrane are also required for the identification and elimination of suboptimal or supernumerary cells during development, regeneration, and adulthood. Required for the recognition and elimination of unfit cells in the developing wing during cell competition. In the developing pupal retina, mediates the elimination of unwanted postmitotic neurons, including supernumerary photoreceptor neurons that form at the periphery of the retina and are contained within incomplete ommatidia units. Also required for efficient elimination and replacement of old neurons by newly generated neurons during regeneration in the adult brain following mechanical injury. Downstream of the flower fitness fingerprints, cells identified as unwanted or unfit are eliminated via apoptosis through the expression of ahuizotl (azot). However, the cells marked for elimination by the flower isoforms only undergo apoptosis if additional thresholds are met; (1) their neighboring fit/healthy cells express different levels of the fwe isoforms, and (2) the levels of the protective signal SPARC expressed by the loser or unwanted cells are unable to inhibit caspase activation. These additional thresholds for flower-mediated apoptosis, allows useful cells to recover from transient and limited stress before they are unnecessarily eliminated. Functions with dally and magu in a mechanism of scaling, which utilises apoptosis to ensure that the dpp morphogen gradient, which mediates organ growth, remains proportional to the size of the growing wing. In this mechanism, fwe represses dally- and Magu-dependent activity in expanding the gradient, and dally/Magu inhibits fwe-dependent apoptosis to keep cell death rate low. When the levels of these different proteins are optimally regulated the gradient correctly scales with organ growth but when this fails, fwe-mediated apoptosis is activated to trim the developing tissue to match the correct size of the gradient. This is Calcium channel flower from Drosophila willistoni (Fruit fly).